Consider the following 98-residue polypeptide: Large ribosomal subunit protein uL23 (98 aa).

The protein belongs to the universal ribosomal protein uL23 family. In terms of assembly, part of the 50S ribosomal subunit. Contacts protein L29, and trigger factor when it is bound to the ribosome.

Functionally, one of the early assembly proteins it binds 23S rRNA. One of the proteins that surrounds the polypeptide exit tunnel on the outside of the ribosome. Forms the main docking site for trigger factor binding to the ribosome. This Caulobacter sp. (strain K31) protein is Large ribosomal subunit protein uL23.